The chain runs to 104 residues: Large ribosomal subunit protein uL24 (104 aa).

This sequence belongs to the universal ribosomal protein uL24 family. As to quaternary structure, part of the 50S ribosomal subunit.

One of two assembly initiator proteins, it binds directly to the 5'-end of the 23S rRNA, where it nucleates assembly of the 50S subunit. Functionally, one of the proteins that surrounds the polypeptide exit tunnel on the outside of the subunit. The protein is Large ribosomal subunit protein uL24 of Corynebacterium jeikeium (strain K411).